A 165-amino-acid chain; its full sequence is AP-3 complex subunit sigma (165 aa).

The protein belongs to the adaptor complexes small subunit family. Adaptor protein complex 3 (AP-3) is a heterotetramer composed of 2 large adaptins (apl5 and apl6), a medium adaptin (apm3) and a small adaptin (aps3).

The protein resides in the golgi apparatus. It is found in the cytoplasmic vesicle membrane. Functionally, part of the AP-3 complex, an adaptor-related complex which is not clathrin-associated. The complex is associated with the Golgi region as well as more peripheral structures. It facilitates the budding of vesicles from the Golgi membrane and may be directly involved in trafficking to the vacuole. In Schizosaccharomyces pombe (strain 972 / ATCC 24843) (Fission yeast), this protein is AP-3 complex subunit sigma (aps3).